Here is a 41-residue protein sequence, read N- to C-terminus: Sucrose porin (41 aa).

The N-terminal stretch at 1 to 22 (MYRKSTLAMLIALLTSAASAHA) is a signal peptide.

This sequence belongs to the porin LamB (TC 1.B.3) family. In terms of assembly, homotrimer.

It is found in the cell outer membrane. Porin for sucrose uptake. This chain is Sucrose porin (scrY), found in Salmonella thompson.